The primary structure comprises 206 residues: N-(5'-phosphoribosyl)anthranilate isomerase (206 aa).

Belongs to the TrpF family.

The catalysed reaction is N-(5-phospho-beta-D-ribosyl)anthranilate = 1-(2-carboxyphenylamino)-1-deoxy-D-ribulose 5-phosphate. It functions in the pathway amino-acid biosynthesis; L-tryptophan biosynthesis; L-tryptophan from chorismate: step 3/5. This is N-(5'-phosphoribosyl)anthranilate isomerase from Chlamydia felis (strain Fe/C-56) (Chlamydophila felis).